Consider the following 214-residue polypeptide: tRNA (guanine-N(7)-)-methyltransferase (214 aa).

Positions 44, 69, 96, and 118 each coordinate S-adenosyl-L-methionine. Asp118 is an active-site residue. Lys122 provides a ligand contact to substrate. Residues 124-129 (RHEKRR) are interaction with RNA. Substrate contacts are provided by residues Asp154 and 192–195 (TEYE).

This sequence belongs to the class I-like SAM-binding methyltransferase superfamily. TrmB family.

It catalyses the reaction guanosine(46) in tRNA + S-adenosyl-L-methionine = N(7)-methylguanosine(46) in tRNA + S-adenosyl-L-homocysteine. Its pathway is tRNA modification; N(7)-methylguanine-tRNA biosynthesis. In terms of biological role, catalyzes the formation of N(7)-methylguanine at position 46 (m7G46) in tRNA. The chain is tRNA (guanine-N(7)-)-methyltransferase from Lactiplantibacillus plantarum (strain ATCC BAA-793 / NCIMB 8826 / WCFS1) (Lactobacillus plantarum).